Here is a 125-residue protein sequence, read N- to C-terminus: Large ribosomal subunit protein uL24 (125 aa).

It belongs to the universal ribosomal protein uL24 family. As to quaternary structure, part of the 50S ribosomal subunit.

Its function is as follows. One of two assembly initiator proteins, it binds directly to the 5'-end of the 23S rRNA, where it nucleates assembly of the 50S subunit. One of the proteins that surrounds the polypeptide exit tunnel on the outside of the subunit. The protein is Large ribosomal subunit protein uL24 of Mycoplasma mobile (strain ATCC 43663 / 163K / NCTC 11711) (Mesomycoplasma mobile).